A 168-amino-acid polypeptide reads, in one-letter code: Nucleoside deoxyribosyltransferase (168 aa).

Glu103 (nucleophile) is an active-site residue.

The protein belongs to the nucleoside deoxyribosyltransferase family.

The enzyme catalyses 2-deoxy-D-ribosyl-base(1) + base(2) = 2-deoxy-D-ribosyl-base(2) + base(1).. It participates in nucleotide metabolism; nucleotide salvage pathway. Functionally, catalyzes the cleavage of the glycosidic bond of 2'-deoxyribonucleosides and the transfer of the deoxyribosyl moiety to an acceptor purine or pyrimidine base. The chain is Nucleoside deoxyribosyltransferase (ntd) from Limosilactobacillus fermentum (Lactobacillus fermentum).